We begin with the raw amino-acid sequence, 309 residues long: Tagatose-6-phosphate kinase (309 aa).

This sequence belongs to the carbohydrate kinase PfkB family. LacC subfamily.

It carries out the reaction D-tagatofuranose 6-phosphate + ATP = D-tagatofuranose 1,6-bisphosphate + ADP + H(+). It participates in carbohydrate metabolism; D-tagatose 6-phosphate degradation; D-glyceraldehyde 3-phosphate and glycerone phosphate from D-tagatose 6-phosphate: step 1/2. The polypeptide is Tagatose-6-phosphate kinase (Streptococcus pneumoniae serotype 19F (strain G54)).